Reading from the N-terminus, the 31-residue chain is Bacteriocin lactocin-705 (31 aa).

In terms of biological role, antibacterial activity against several lactic acid bacteria, Listeria, Streptococci, etc. The polypeptide is Bacteriocin lactocin-705 (Lacticaseibacillus paracasei (Lactobacillus paracasei)).